We begin with the raw amino-acid sequence, 561 residues long: DNA ligase (561 aa).

Glu253 is an ATP binding site. Residue Lys255 is the N6-AMP-lysine intermediate of the active site. 6 residues coordinate ATP: Arg260, Arg275, Glu304, Phe344, Arg421, and Lys427.

This sequence belongs to the ATP-dependent DNA ligase family. The cofactor is Mg(2+).

The enzyme catalyses ATP + (deoxyribonucleotide)n-3'-hydroxyl + 5'-phospho-(deoxyribonucleotide)m = (deoxyribonucleotide)n+m + AMP + diphosphate.. DNA ligase that seals nicks in double-stranded DNA during DNA replication, DNA recombination and DNA repair. This Halobacterium salinarum (strain ATCC 29341 / DSM 671 / R1) protein is DNA ligase.